The primary structure comprises 151 residues: uncharacterized protein (151 aa).

Residues 2–133 (KTLIVEDNPK…VFVEAVHYSQ (132 aa)) form the Response regulatory domain. A 4-aspartylphosphate modification is found at Asp-53.

This is an uncharacterized protein from Sinorhizobium fredii (strain NBRC 101917 / NGR234).